We begin with the raw amino-acid sequence, 104 residues long: Large ribosomal subunit protein uL23 (104 aa).

The protein belongs to the universal ribosomal protein uL23 family. In terms of assembly, part of the 50S ribosomal subunit. Contacts protein L29, and trigger factor when it is bound to the ribosome.

Its function is as follows. One of the early assembly proteins it binds 23S rRNA. One of the proteins that surrounds the polypeptide exit tunnel on the outside of the ribosome. Forms the main docking site for trigger factor binding to the ribosome. The chain is Large ribosomal subunit protein uL23 from Ralstonia nicotianae (strain ATCC BAA-1114 / GMI1000) (Ralstonia solanacearum).